Here is a 164-residue protein sequence, read N- to C-terminus: R-phycoerythrin alpha chain (164 aa).

(2R,3E)-phycoerythrobilin-binding residues include cysteine 82 and cysteine 139.

The protein belongs to the phycobiliprotein family. Heterodimer of an alpha and a beta chain. Post-translationally, contains two covalently linked bilin chromophores.

It localises to the plastid. The protein resides in the chloroplast thylakoid membrane. Functionally, light-harvesting photosynthetic bile pigment-protein from the phycobiliprotein complex. The protein is R-phycoerythrin alpha chain (cpeA) of Pyropia haitanensis (Red seaweed).